We begin with the raw amino-acid sequence, 129 residues long: Flagellar assembly factor FliW (129 aa).

This sequence belongs to the FliW family. As to quaternary structure, interacts with flagellins FlaA and FlaB but not with FlaC; recognizes glycosylated and non-glycosylated FlaA equally. Interacts with CsrA. May form a 3-way complex of flagellin, FliS and FliW simultaneously in which FliS and FliW do not directly interact.

It localises to the cytoplasm. Functionally, acts as an anti-CsrA protein, binds CsrA and prevents it from repressing translation of its target genes, one of which is flagellin. Binds to flagellin and participates in the assembly of the flagellum. In terms of biological role, overexpression leads to increased levels of FlaA and FlaB, but levels of FlaC remain stable. Involved in post-transcriptional regulation of flagellin biosynthesis. In Campylobacter jejuni subsp. jejuni serotype O:6 (strain 81116 / NCTC 11828), this protein is Flagellar assembly factor FliW.